The chain runs to 110 residues: Nucleoid-associated protein YE3092 (110 aa).

It belongs to the YbaB/EbfC family. Homodimer.

It is found in the cytoplasm. The protein resides in the nucleoid. Functionally, binds to DNA and alters its conformation. May be involved in regulation of gene expression, nucleoid organization and DNA protection. The chain is Nucleoid-associated protein YE3092 from Yersinia enterocolitica serotype O:8 / biotype 1B (strain NCTC 13174 / 8081).